Here is a 173-residue protein sequence, read N- to C-terminus: Alpha-crystallin A chain (173 aa).

The residue at position 1 (Met1) is an N-acetylmethionine. The segment at 1 to 63 is required for complex formation with BFSP1 and BFSP2; sequence MDVTIQHPWF…RTVLDSGISE (63 aa). Gln6 is modified (deamidated glutamine; partial). A Phosphoserine modification is found at Ser45. Gln50 carries the post-translational modification Deamidated glutamine; partial. Residues 52 to 162 enclose the sHSP domain; it reads LFRTVLDSGI…GHSERAIPVS (111 aa). Lys70 carries the post-translational modification N6-acetyllysine. Residue Gln90 is modified to Deamidated glutamine; partial. Lys99 carries the N6-acetyllysine modification. His100 contributes to the Zn(2+) binding site. Residue Asn101 is modified to Deamidated asparagine; partial. The Zn(2+) site is built by Glu102 and His107. Position 122 is a phosphoserine (Ser122). Position 123 is a deamidated asparagine; partial (Asn123). The interval 145 to 173 is disordered; that stretch reads KVQSGLDAGHSERAIPVSREEKPSSAPSS. Position 147 is a deamidated glutamine; partial (Gln147). Residues 153–167 are compositionally biased toward basic and acidic residues; it reads GHSERAIPVSREEKP. His154 is a Zn(2+) binding site. Residue Ser162 is glycosylated (O-linked (GlcNAc) serine).

It belongs to the small heat shock protein (HSP20) family. Heteromer composed of three CRYAA and one CRYAB subunits. Inter-subunit bridging via zinc ions enhances stability, which is crucial as there is no protein turn over in the lens. Can also form homodimers and homotetramers (dimers of dimers) which serve as the building blocks of homooligomers. Within homooligomers, the zinc-binding motif is created from residues of 3 different molecules. His-100 and Glu-102 from one molecule are ligands of the zinc ion, and His-107 and His-154 residues from additional molecules complete the site with tetrahedral coordination geometry. Part of a complex required for lens intermediate filament formation composed of BFSP1, BFSP2 and CRYAA. In terms of processing, acetylation at Lys-70 may increase chaperone activity. Undergoes age-dependent proteolytical cleavage at the C-terminus.

Its subcellular location is the cytoplasm. The protein resides in the nucleus. In terms of biological role, contributes to the transparency and refractive index of the lens. Acts as a chaperone, preventing aggregation of various proteins under a wide range of stress conditions. Required for the correct formation of lens intermediate filaments as part of a complex composed of BFSP1, BFSP2 and CRYAA. This Cavia porcellus (Guinea pig) protein is Alpha-crystallin A chain (CRYAA).